A 147-amino-acid polypeptide reads, in one-letter code: Deoxyuridine 5'-triphosphate nucleotidohydrolase (147 aa).

Substrate is bound by residues 68–70, Asn81, and 85–87; these read RSG and TID.

The protein belongs to the dUTPase family. Mg(2+) is required as a cofactor.

It catalyses the reaction dUTP + H2O = dUMP + diphosphate + H(+). It functions in the pathway pyrimidine metabolism; dUMP biosynthesis; dUMP from dCTP (dUTP route): step 2/2. This enzyme is involved in nucleotide metabolism: it produces dUMP, the immediate precursor of thymidine nucleotides and it decreases the intracellular concentration of dUTP so that uracil cannot be incorporated into DNA. The chain is Deoxyuridine 5'-triphosphate nucleotidohydrolase from Solibacter usitatus (strain Ellin6076).